Here is a 396-residue protein sequence, read N- to C-terminus: Elongation factor Tu 2 (396 aa).

The tr-type G domain maps to K10–E206. The segment at G19–T26 is G1. G19–T26 lines the GTP pocket. T26 lines the Mg(2+) pocket. Residues G60–N64 are G2. A G3 region spans residues D81–G84. Residues D81–H85 and N136–D139 contribute to the GTP site. Residues N136–D139 are G4. The G5 stretch occupies residues S174–K176.

It belongs to the TRAFAC class translation factor GTPase superfamily. Classic translation factor GTPase family. EF-Tu/EF-1A subfamily. As to quaternary structure, monomer.

It is found in the cytoplasm. It catalyses the reaction GTP + H2O = GDP + phosphate + H(+). Its function is as follows. GTP hydrolase that promotes the GTP-dependent binding of aminoacyl-tRNA to the A-site of ribosomes during protein biosynthesis. In Albidiferax ferrireducens (strain ATCC BAA-621 / DSM 15236 / T118) (Rhodoferax ferrireducens), this protein is Elongation factor Tu 2.